Reading from the N-terminus, the 170-residue chain is MHPALYTRASMIREIAAAVAFISKFLRTKGLMNERQLQTFSQSLQELLAEHYKHHWFPEKPCKGSGYRCIRINHKMDPLIGQAAQRIGLSSQELFQLLPSELTLWVDPYEVSYRIGEDGSICVLYEAAPAGGSQNNTNMQMVDSRISCKEELLLGRTSPSKSYNMMTVSG.

Belongs to the BTG family.

Anti-proliferative protein. The chain is Protein BTG1 (BTG1) from Gallus gallus (Chicken).